Consider the following 119-residue polypeptide: Large ribosomal subunit protein bL19 (119 aa).

This sequence belongs to the bacterial ribosomal protein bL19 family.

Functionally, this protein is located at the 30S-50S ribosomal subunit interface and may play a role in the structure and function of the aminoacyl-tRNA binding site. This Pediococcus pentosaceus (strain ATCC 25745 / CCUG 21536 / LMG 10740 / 183-1w) protein is Large ribosomal subunit protein bL19.